Consider the following 148-residue polypeptide: Protoporphyrinogen IX oxidase (148 aa).

4 helical membrane passes run 7–27, 59–79, 86–106, and 128–148; these read YFLWVKAFHVIAVISWMAALF, FIASPAMGFTLITGILMLLIA, GGWLHAKLALVVLLLIYHFYC, and FNEIPTILMILIVILVVVKPF. His-15 provides a ligand contact to heme. Lys-92 is a binding site for heme.

The protein belongs to the HemJ family. In terms of assembly, homodimer. Requires heme b as cofactor.

It localises to the cell membrane. The enzyme catalyses protoporphyrinogen IX + 3 A = protoporphyrin IX + 3 AH2. Its pathway is porphyrin-containing compound metabolism; protoporphyrin-IX biosynthesis; protoporphyrin-IX from protoporphyrinogen-IX: step 1/1. Catalyzes the oxidation of protoporphyrinogen IX to protoporphyrin IX. Is involved in the biosynthesis of tetrapyrrole molecules like heme. Does not use oxygen or artificial electron acceptors such as menadione or benzoquinone. The polypeptide is Protoporphyrinogen IX oxidase (Helicobacter pylori (strain J99 / ATCC 700824) (Campylobacter pylori J99)).